The sequence spans 455 residues: Keratin, type I cuticular Ha5 (455 aa).

The segment at 1–97 (MASKCLKASF…FGEGILTGNE (97 aa)) is head. Residues 97–408 (EKETMQFLND…GLLDSEDCKL (312 aa)) enclose the IF rod domain. A coil 1A region spans residues 98–132 (KETMQFLNDRLASYLEKVRQLERENAELESRIRDW). The linker 1 stretch occupies residues 133–143 (CEQQVPYLCPD). Positions 144–244 (YQSYFQTIEE…HEEEVNSLRC (101 aa)) are coil 1B. The segment at 245–260 (QLGDRLNVEVDAAPPV) is linker 12. Positions 261–404 (DLNRVLNEMR…STYRGLLDSE (144 aa)) are coil 2. The segment at 405–455 (DCKLPCNPCAPDHSPSKSCLPCLPAASCGPGTAHTTCSPRPICVSCPGSRF) is tail.

This sequence belongs to the intermediate filament family.

This chain is Keratin, type I cuticular Ha5, found in Ovis aries (Sheep).